The primary structure comprises 127 residues: Fluoride-specific ion channel FluC (127 aa).

4 helical membrane-spanning segments follow: residues 4–24 (FTLLGFIALGGAFGACSRYLI), 35–55 (GFPYGTLTVNVIGSLLMGILM), 71–91 (IIGLGFLGALTTFSTFSMDNV), and 99–119 (FIKAGLNILLNVALSITACFI). Na(+) is bound by residues Gly-78 and Thr-81.

This sequence belongs to the fluoride channel Fluc/FEX (TC 1.A.43) family.

Its subcellular location is the cell inner membrane. The enzyme catalyses fluoride(in) = fluoride(out). With respect to regulation, na(+) is not transported, but it plays an essential structural role and its presence is essential for fluoride channel function. Fluoride-specific ion channel. Important for reducing fluoride concentration in the cell, thus reducing its toxicity. In Photobacterium profundum (strain SS9), this protein is Fluoride-specific ion channel FluC.